A 322-amino-acid polypeptide reads, in one-letter code: Ferredoxin--NADP reductase (322 aa).

FAD-binding residues include T12, E31, Q39, Y44, A86, F119, and T317.

Belongs to the ferredoxin--NADP reductase type 2 family. As to quaternary structure, homodimer. The cofactor is FAD.

It catalyses the reaction 2 reduced [2Fe-2S]-[ferredoxin] + NADP(+) + H(+) = 2 oxidized [2Fe-2S]-[ferredoxin] + NADPH. The protein is Ferredoxin--NADP reductase of Acholeplasma laidlawii (strain PG-8A).